The sequence spans 345 residues: tRNA N6-adenosine threonylcarbamoyltransferase (345 aa).

Fe cation-binding residues include His115 and His119. Substrate contacts are provided by residues 137 to 141 (LVSGG), Asp170, Gly183, Asp187, and Asn276. A Fe cation-binding site is contributed by Asp306.

This sequence belongs to the KAE1 / TsaD family. Requires Fe(2+) as cofactor.

It localises to the cytoplasm. The enzyme catalyses L-threonylcarbamoyladenylate + adenosine(37) in tRNA = N(6)-L-threonylcarbamoyladenosine(37) in tRNA + AMP + H(+). Required for the formation of a threonylcarbamoyl group on adenosine at position 37 (t(6)A37) in tRNAs that read codons beginning with adenine. Is involved in the transfer of the threonylcarbamoyl moiety of threonylcarbamoyl-AMP (TC-AMP) to the N6 group of A37, together with TsaE and TsaB. TsaD likely plays a direct catalytic role in this reaction. This chain is tRNA N6-adenosine threonylcarbamoyltransferase, found in Pediococcus pentosaceus (strain ATCC 25745 / CCUG 21536 / LMG 10740 / 183-1w).